Consider the following 313-residue polypeptide: MIIVTGGAGMIGSNIVKALNEAGINDILVVDNLKNGKKFKNLVDLDITDYMDRDDFLTQIMAGDDFGPIEAIFHEGACSATTEWDGKYMMLNNYEYSKELLHYCLDREIPFLYASSAATYGETETFVEEREYEGALNVYGYSKQQFDNYVRRLWKDAEEHGEQLSQITGFRYFNVYGPREDHKGSMASVAFHLNNQINAGENPKLFAGSESFKRDFVYVGDVCKVNLWFLENGVSGIFNCGTGRAESFEEVAKAVVKHHNKGEIQTIPFPDHLKGAYQEFTQADLTKLRAAGCDVEFKTVAEGVAEYLAIQNR.

Residues 10–11 (MI), 31–32 (DN), Lys-38, Arg-53, 75–79 (EGACS), and Asn-92 contribute to the NADP(+) site. Catalysis depends on Tyr-139, which acts as the Proton acceptor. Lys-143 contacts NADP(+). Asn-174 serves as a coordination point for substrate. NADP(+) contacts are provided by Val-175 and Lys-183. Lys-183 acts as the Proton acceptor in catalysis. Residues Ser-185, His-192, 206–209 (FAGS), Arg-214, and Tyr-277 each bind substrate.

Belongs to the NAD(P)-dependent epimerase/dehydratase family. HldD subfamily. Homopentamer. NADP(+) is required as a cofactor.

It catalyses the reaction ADP-D-glycero-beta-D-manno-heptose = ADP-L-glycero-beta-D-manno-heptose. Its pathway is nucleotide-sugar biosynthesis; ADP-L-glycero-beta-D-manno-heptose biosynthesis; ADP-L-glycero-beta-D-manno-heptose from D-glycero-beta-D-manno-heptose 7-phosphate: step 4/4. In terms of biological role, catalyzes the interconversion between ADP-D-glycero-beta-D-manno-heptose and ADP-L-glycero-beta-D-manno-heptose via an epimerization at carbon 6 of the heptose. In Vibrio campbellii (strain ATCC BAA-1116), this protein is ADP-L-glycero-D-manno-heptose-6-epimerase.